A 173-amino-acid polypeptide reads, in one-letter code: NADH-ubiquinone oxidoreductase chain 6 (173 aa).

Transmembrane regions (helical) follow at residues 1–21, 27–47, 48–68, 85–105, 106–126, and 139–159; these read MTYFVLFLGLCFVLGGLAVAS, YGVVGLVLASVAGCGWLLSLG, VSFVSLVLFMVYLGGMLVVFV, WGVVGYGVGFVVVLVAGLIVG, GSIGSLDFGVVTVDSVGMFSV, and CGVGMLLVAGWGLLLTLFVVL.

Belongs to the complex I subunit 6 family.

Its subcellular location is the mitochondrion membrane. It catalyses the reaction a ubiquinone + NADH + 5 H(+)(in) = a ubiquinol + NAD(+) + 4 H(+)(out). Core subunit of the mitochondrial membrane respiratory chain NADH dehydrogenase (Complex I) that is believed to belong to the minimal assembly required for catalysis. Complex I functions in the transfer of electrons from NADH to the respiratory chain. The immediate electron acceptor for the enzyme is believed to be ubiquinone. This Aethia psittacula (Parakeet auklet) protein is NADH-ubiquinone oxidoreductase chain 6 (MT-ND6).